The sequence spans 77 residues: NAD(P)H-quinone oxidoreductase subunit L (77 aa).

A run of 2 helical transmembrane segments spans residues 12–32 and 47–67; these read LIAY…LLFY and LGIY…SPFL.

It belongs to the complex I NdhL subunit family. As to quaternary structure, NDH-1 can be composed of about 15 different subunits; different subcomplexes with different compositions have been identified which probably have different functions.

The protein localises to the cellular thylakoid membrane. It carries out the reaction a plastoquinone + NADH + (n+1) H(+)(in) = a plastoquinol + NAD(+) + n H(+)(out). The enzyme catalyses a plastoquinone + NADPH + (n+1) H(+)(in) = a plastoquinol + NADP(+) + n H(+)(out). NDH-1 shuttles electrons from an unknown electron donor, via FMN and iron-sulfur (Fe-S) centers, to quinones in the respiratory and/or the photosynthetic chain. The immediate electron acceptor for the enzyme in this species is believed to be plastoquinone. Couples the redox reaction to proton translocation, and thus conserves the redox energy in a proton gradient. Cyanobacterial NDH-1 also plays a role in inorganic carbon-concentration. The protein is NAD(P)H-quinone oxidoreductase subunit L of Prochlorococcus marinus (strain AS9601).